Reading from the N-terminus, the 356-residue chain is S-adenosylmethionine:tRNA ribosyltransferase-isomerase (356 aa).

This sequence belongs to the QueA family. In terms of assembly, monomer.

Its subcellular location is the cytoplasm. It carries out the reaction 7-aminomethyl-7-carbaguanosine(34) in tRNA + S-adenosyl-L-methionine = epoxyqueuosine(34) in tRNA + adenine + L-methionine + 2 H(+). The protein operates within tRNA modification; tRNA-queuosine biosynthesis. Its function is as follows. Transfers and isomerizes the ribose moiety from AdoMet to the 7-aminomethyl group of 7-deazaguanine (preQ1-tRNA) to give epoxyqueuosine (oQ-tRNA). This is S-adenosylmethionine:tRNA ribosyltransferase-isomerase from Cronobacter sakazakii (strain ATCC BAA-894) (Enterobacter sakazakii).